The sequence spans 967 residues: MVKTQIKEKKKDEKVTIPLPGKIKTVLAFLVVLAFAAYGFYIRHLTAGKYFSDPDTFYHFEIYKLVLKEGLPRYYPMADAPFGSLIGEPLGLYILPAIFYKIISIFGYNELEAFLLWPPFVGFLSVIGVYLLGRKVLNEWAGMWGAIILSVLTANFSRTFSGNARGDGPFMMLFTFSAVLMLYYLTEENKNKKIIWGTLFVLLAGISTAAWNGSPFGLMVLLGFASFQTIILFIFGKINELREFIKEYYPAYLGILAISYLLTIPGIGKIGGFVRFAFEVFLGLVFLAIVMLYGGKYLNYSDKKHRFAVVAVIVIAGFAGAYIYVGPKLFTLMGGAYQSTQVYETVQELAKTDWGDVKVYYGVEKPNGIVFFLGLVGAMIVTARYLYKLFKDGRRPHEELFAITFYVMSIYLLWTAARFLFLASYAIALMSGVFAGYVLETVEKMKESIPIKAALGGVIAIMLLLIPLTHGPLLAQSAKSMRTTEIETSGWEDALKWLRENTPEYSTATSWWDYGYWIESSLLGQRRASADGGHARDRDHILALFLARDGNISEVDFESWELNYFLVYLNDWAKFNAISYLGGAITRREYNGDESGRGAVTTLLPLPRYGEKYVNLYAKVIVDVSNSSVKVTVGDRECDPLMVTFTPSGKTIKGTGTCSDGNAFPYVLHLTPTIGVLAYYKVATANFIKLAFGVPASTIPGFSDKLFSNFEPVYESGNVIVYRFTPFGIYKIEENINGTWKQVYNLTPGKHELKLYISAFGRDIENATLYIYAINNEKIIEKIKIAEISHMDYLNEYPIAVNVTLPNATSYRFVLVQKGPIGVLLDAPKVNGEIRSPTNILREGESGEIELKVGVDKDYTADLYLRATFIYLVRKSGKDNEDYDAAFEPQMDVFFITKIGENIQLKEGENTVKVRAELPEGVISSYKDELQRKYGDKLIIRGIRVEPVFIAEKEYLMLEVSASAPHH.

The Cytoplasmic portion of the chain corresponds to M1–G21. The chain crosses the membrane as a helical span at residues K22–I42. The Extracellular portion of the chain corresponds to R43–E112. The short motif at D53–D55 is the DXD motif 1 element. Residue D55 participates in Mn(2+) binding. Residues A113–G133 form a helical membrane-spanning segment. Residues R134–K135 lie on the Cytoplasmic side of the membrane. The chain crosses the membrane as a helical span at residues V136–F156. Over S157–R165 the chain is Extracellular. Residues R165 and D167 each contribute to the Mn(2+) site. The DXD motif 2 signature appears at R165 to D167. Residues G166 to T186 form a helical membrane-spanning segment. Residues E187–K193 lie on the Cytoplasmic side of the membrane. The helical transmembrane segment at I194 to S214 threads the bilayer. Residue P215 is a topological domain, extracellular. Residues F216 to G236 form a helical membrane-spanning segment. The Cytoplasmic portion of the chain corresponds to K237–E247. Residues Y248–G268 traverse the membrane as a helical segment. Residue K269 is a topological domain, extracellular. The helical transmembrane segment at I270–V290 threads the bilayer. The Cytoplasmic portion of the chain corresponds to M291–R306. Residues F307–P327 form a helical membrane-spanning segment. The Extracellular portion of the chain corresponds to K328 to Y360. The short motif at T345–E348 is the TIXE motif element. The helical transmembrane segment at Y361 to V381 threads the bilayer. The Cytoplasmic segment spans residues T382–P396. Residues H397 to A417 traverse the membrane as a helical segment. Position 418 (R418) is a topological domain, extracellular. R418 is an a glycophospholipid binding site. A helical membrane pass occupies residues F419–L439. Residues E440–A453 are Cytoplasmic-facing. A helical membrane pass occupies residues A454–L474. Topologically, residues A475 to H967 are extracellular. Residues W511 to D513 form an interacts with target acceptor peptide in protein substrate region. The WWDYG motif motif lies at W511–G515. A glycophospholipid is bound at residue Y516. Residues D571 to I578 carry the DK motif motif.

It belongs to the STT3 family. The cofactor is Mn(2+). It depends on Mg(2+) as a cofactor.

Its subcellular location is the cell membrane. The catalysed reaction is an archaeal dolichyl phosphooligosaccharide + [protein]-L-asparagine = an archaeal dolichyl phosphate + a glycoprotein with the oligosaccharide chain attached by N-beta-D-glycosyl linkage to a protein L-asparagine.. It participates in protein modification; protein glycosylation. In terms of biological role, oligosaccharyl transferase (OST) that catalyzes the initial transfer of a defined glycan (ManNAcXyl(2)GlcAMan(2)GalNAc in P.furiosus) from the lipid carrier dolichol-monophosphate to an asparagine residue within an Asn-X-Ser/Thr consensus motif in nascent polypeptide chains, the first step in protein N-glycosylation. In Pyrococcus furiosus (strain ATCC 43587 / DSM 3638 / JCM 8422 / Vc1), this protein is Dolichyl-phosphooligosaccharide-protein glycotransferase 1 (aglB1).